The chain runs to 421 residues: Phosphoribosylamine--glycine ligase (421 aa).

In terms of domain architecture, ATP-grasp spans 108–314 (KEIMVKYNVP…FAQNIDDIMM (207 aa)). 134-195 (IEEQGAPIVV…EEFLDGEEFS (62 aa)) serves as a coordination point for ATP. The Mg(2+) site is built by E284 and N286.

The protein belongs to the GARS family. Mg(2+) serves as cofactor. Mn(2+) is required as a cofactor.

The catalysed reaction is 5-phospho-beta-D-ribosylamine + glycine + ATP = N(1)-(5-phospho-beta-D-ribosyl)glycinamide + ADP + phosphate + H(+). It functions in the pathway purine metabolism; IMP biosynthesis via de novo pathway; N(1)-(5-phospho-D-ribosyl)glycinamide from 5-phospho-alpha-D-ribose 1-diphosphate: step 2/2. This is Phosphoribosylamine--glycine ligase from Streptococcus pyogenes serotype M1.